Here is a 307-residue protein sequence, read N- to C-terminus: Taste receptor type 2 member 41 (307 aa).

The Extracellular portion of the chain corresponds to 1–7 (MQAALTA). A helical transmembrane segment spans residues 8 to 28 (FFMLLFSLLSLLGIAANGFIV). Residues 29–40 (LVLGREWLRYGR) lie on the Cytoplasmic side of the membrane. A helical transmembrane segment spans residues 41–61 (LLPLDMILISLGASRFCLQLV). The Extracellular segment spans residues 62-88 (GTVHNFYYSAQKVEYSGGLGRQFFHLH). A helical membrane pass occupies residues 89-109 (WHFLNSATFWFCSWLSVLFCV). The Cytoplasmic portion of the chain corresponds to 110 to 129 (KIANITHPTFLWLKWRFPGW). Residues 130–150 (VPWLLLGSVLISFIITLLFFW) traverse the membrane as a helical segment. The Extracellular segment spans residues 151 to 183 (VNYPAYQEFLIRKFSVNMTYKWNTRIETYYFPS). N-linked (GlcNAc...) asparagine glycosylation occurs at N167. A helical membrane pass occupies residues 184 to 204 (LKLVIWSIPFSVFLVSIMLLI). The Cytoplasmic portion of the chain corresponds to 205-234 (NSLRRHTQRMQHNGHSLQDPSTQAHTRALK). A helical membrane pass occupies residues 235-255 (SLISFLILYALSFLSLIIDAT). Residues 256–264 (KFISMQNDF) lie on the Extracellular side of the membrane. The chain crosses the membrane as a helical span at residues 265–285 (YWPWQIAVYLCISVHPFILIF). At 286 to 307 (SNLKLRSVFSQLLLLARGFWVA) the chain is on the cytoplasmic side.

The protein belongs to the G-protein coupled receptor T2R family.

It localises to the membrane. In terms of biological role, receptor that may play a role in the perception of bitterness and is gustducin-linked. May play a role in sensing the chemical composition of the gastrointestinal content. The activity of this receptor may stimulate alpha gustducin, mediate PLC-beta-2 activation and lead to the gating of TRPM5. This Pan troglodytes (Chimpanzee) protein is Taste receptor type 2 member 41 (TAS2R41).